Reading from the N-terminus, the 192-residue chain is N-terminal acetyltransferase A complex catalytic subunit NAA10 (192 aa).

Positions 2-152 (VCIRRATVDD…DAYDMRKNLK (151 aa)) constitute an N-acetyltransferase domain.

It belongs to the acetyltransferase family. ARD1 subfamily. In terms of assembly, part of the NatA complex. Interacts with NAA15. Expressed in leaves, roots, shoots and flowers.

The enzyme catalyses N-terminal glycyl-[protein] + acetyl-CoA = N-terminal N(alpha)-acetylglycyl-[protein] + CoA + H(+). It carries out the reaction N-terminal L-alanyl-[protein] + acetyl-CoA = N-terminal N(alpha)-acetyl-L-alanyl-[protein] + CoA + H(+). The catalysed reaction is N-terminal L-seryl-[protein] + acetyl-CoA = N-terminal N(alpha)-acetyl-L-seryl-[protein] + CoA + H(+). It catalyses the reaction N-terminal L-valyl-[protein] + acetyl-CoA = N-terminal N(alpha)-acetyl-L-valyl-[protein] + CoA + H(+). The enzyme catalyses N-terminal L-cysteinyl-[protein] + acetyl-CoA = N-terminal N(alpha)-acetyl-L-cysteinyl-[protein] + CoA + H(+). It carries out the reaction N-terminal L-threonyl-[protein] + acetyl-CoA = N-terminal N(alpha)-acetyl-L-threonyl-[protein] + CoA + H(+). Catalytic subunit of the NatA N-alpha-acetyltransferase complex. Required for male gametocyte development, embryogenesis, suspensor development and the formation of the quiescent center (QC) in the root meristem. Involved in plant immunity through the regulation of SNC1 and RPM1 stability. This Arabidopsis thaliana (Mouse-ear cress) protein is N-terminal acetyltransferase A complex catalytic subunit NAA10.